A 166-amino-acid chain; its full sequence is Monodehydroascorbate reductase, fruit isozyme (166 aa).

It belongs to the FAD-dependent oxidoreductase family. FAD is required as a cofactor. In terms of processing, the N-terminus is blocked.

The catalysed reaction is 2 monodehydro-L-ascorbate radical + NADH + H(+) = 2 L-ascorbate + NAD(+). Functionally, catalyzes the conversion of monodehydroascorbate to ascorbate, oxidizing NADH in the process. This chain is Monodehydroascorbate reductase, fruit isozyme, found in Cucumis sativus (Cucumber).